We begin with the raw amino-acid sequence, 71 residues long: Protein DP71L (71 aa).

Important for host CHOP inhibition regions lie at residues valine 16–phenylalanine 18 and leucine 57–leucine 61.

Belongs to the asfivirus DP71L family. As to quaternary structure, interacts (via C-terminus) with host PPP1CB.

Its function is as follows. Interacts with the host phosphatase PP1 catalytic subunit (PPP1CB) and recruits it to dephosphorylate EIF2S1/eIF2alpha and therefore restores the host translation that has been shut-down by the host. Also inhibits the EIF2S1/eIF2alpha-ATF4-DDIT3/CHOP pathway. In African swine fever virus (strain Badajoz 1971 Vero-adapted) (Ba71V), this protein is Protein DP71L.